The primary structure comprises 293 residues: Acetyl-coenzyme A carboxylase carboxyl transferase subunit beta (293 aa).

Residues 29–293 (LWRKCPRCEG…MGWPPLALDD (265 aa)) enclose the CoA carboxyltransferase N-terminal domain. Residues Cys-33, Cys-36, Cys-52, and Cys-55 each coordinate Zn(2+). The C4-type zinc finger occupies 33-55 (CPRCEGVVYRPELDRNMDVCPKC).

This sequence belongs to the AccD/PCCB family. In terms of assembly, acetyl-CoA carboxylase is a heterohexamer composed of biotin carboxyl carrier protein (AccB), biotin carboxylase (AccC) and two subunits each of ACCase subunit alpha (AccA) and ACCase subunit beta (AccD). The cofactor is Zn(2+).

It is found in the cytoplasm. It carries out the reaction N(6)-carboxybiotinyl-L-lysyl-[protein] + acetyl-CoA = N(6)-biotinyl-L-lysyl-[protein] + malonyl-CoA. The protein operates within lipid metabolism; malonyl-CoA biosynthesis; malonyl-CoA from acetyl-CoA: step 1/1. Component of the acetyl coenzyme A carboxylase (ACC) complex. Biotin carboxylase (BC) catalyzes the carboxylation of biotin on its carrier protein (BCCP) and then the CO(2) group is transferred by the transcarboxylase to acetyl-CoA to form malonyl-CoA. In Alcanivorax borkumensis (strain ATCC 700651 / DSM 11573 / NCIMB 13689 / SK2), this protein is Acetyl-coenzyme A carboxylase carboxyl transferase subunit beta.